The sequence spans 510 residues: ATP synthase subunit alpha (510 aa).

169 to 176 serves as a coordination point for ATP; it reads GDRQTGKT.

It belongs to the ATPase alpha/beta chains family. In terms of assembly, F-type ATPases have 2 components, CF(1) - the catalytic core - and CF(0) - the membrane proton channel. CF(1) has five subunits: alpha(3), beta(3), gamma(1), delta(1), epsilon(1). CF(0) has four main subunits: a(1), b(1), b'(1) and c(9-12).

Its subcellular location is the cell inner membrane. It carries out the reaction ATP + H2O + 4 H(+)(in) = ADP + phosphate + 5 H(+)(out). Produces ATP from ADP in the presence of a proton gradient across the membrane. The alpha chain is a regulatory subunit. In Rhodopseudomonas palustris (strain ATCC BAA-98 / CGA009), this protein is ATP synthase subunit alpha.